Here is a 194-residue protein sequence, read N- to C-terminus: dCTP deaminase (194 aa).

DCTP contacts are provided by residues Arg110–Arg115, Asp128, Val136–Glu138, Tyr171, Lys178, and Gln182. Glu138 functions as the Proton donor/acceptor in the catalytic mechanism. The tract at residues Lys175–Asp194 is disordered. Over residues Lys180–Asp194 the composition is skewed to polar residues.

The protein belongs to the dCTP deaminase family. As to quaternary structure, homotrimer.

The catalysed reaction is dCTP + H2O + H(+) = dUTP + NH4(+). It functions in the pathway pyrimidine metabolism; dUMP biosynthesis; dUMP from dCTP (dUTP route): step 1/2. In terms of biological role, catalyzes the deamination of dCTP to dUTP. This chain is dCTP deaminase, found in Actinobacillus pleuropneumoniae serotype 5b (strain L20).